The primary structure comprises 532 residues: 2,3-bisphosphoglycerate-independent phosphoglycerate mutase (532 aa).

D15 and S65 together coordinate Mn(2+). S65 (phosphoserine intermediate) is an active-site residue. Residues H126, 156-157 (RD), R188, R194, 258-261 (RPDR), and K331 contribute to the substrate site. Positions 398, 402, 439, 440, and 457 each coordinate Mn(2+).

This sequence belongs to the BPG-independent phosphoglycerate mutase family. As to quaternary structure, monomer. Mn(2+) is required as a cofactor.

The enzyme catalyses (2R)-2-phosphoglycerate = (2R)-3-phosphoglycerate. Its pathway is carbohydrate degradation; glycolysis; pyruvate from D-glyceraldehyde 3-phosphate: step 3/5. Its function is as follows. Catalyzes the interconversion of 2-phosphoglycerate and 3-phosphoglycerate. This Cyanothece sp. (strain PCC 7425 / ATCC 29141) protein is 2,3-bisphosphoglycerate-independent phosphoglycerate mutase.